The following is a 486-amino-acid chain: Betaine aldehyde dehydrogenase (486 aa).

Residues Thr23 and Asp90 each coordinate K(+). NAD(+) is bound at residue 147–149 (GAW). The Charge relay system role is filled by Lys159. Residues 173–176 (KPSE) and 226–229 (ESGT) each bind NAD(+). Residue Leu241 coordinates K(+). Glu247 serves as the catalytic Proton acceptor. Gly249, Cys281, and Glu382 together coordinate NAD(+). Cys281 acts as the Nucleophile in catalysis. Cys281 is subject to Cysteine sulfenic acid (-SOH). Positions 452 and 455 each coordinate K(+). Glu459 functions as the Charge relay system in the catalytic mechanism.

The protein belongs to the aldehyde dehydrogenase family. In terms of assembly, dimer of dimers. The cofactor is K(+).

The catalysed reaction is betaine aldehyde + NAD(+) + H2O = glycine betaine + NADH + 2 H(+). Its pathway is amine and polyamine biosynthesis; betaine biosynthesis via choline pathway; betaine from betaine aldehyde: step 1/1. Its function is as follows. Involved in the biosynthesis of the osmoprotectant glycine betaine. Catalyzes the irreversible oxidation of betaine aldehyde to the corresponding acid. This chain is Betaine aldehyde dehydrogenase, found in Vibrio parahaemolyticus serotype O3:K6 (strain RIMD 2210633).